Here is a 105-residue protein sequence, read N- to C-terminus: Urease subunit beta (105 aa).

This sequence belongs to the urease beta subunit family. Heterotrimer of UreA (gamma), UreB (beta) and UreC (alpha) subunits. Three heterotrimers associate to form the active enzyme.

It is found in the cytoplasm. The enzyme catalyses urea + 2 H2O + H(+) = hydrogencarbonate + 2 NH4(+). It functions in the pathway nitrogen metabolism; urea degradation; CO(2) and NH(3) from urea (urease route): step 1/1. This Marinomonas sp. (strain MWYL1) protein is Urease subunit beta.